We begin with the raw amino-acid sequence, 89 residues long: Small ribosomal subunit protein uS15c (89 aa).

This sequence belongs to the universal ribosomal protein uS15 family. As to quaternary structure, part of the 30S ribosomal subunit.

It localises to the plastid. The protein resides in the organellar chromatophore. The sequence is that of Small ribosomal subunit protein uS15c (rps15) from Paulinella chromatophora.